The primary structure comprises 179 residues: UPF0227 protein Shewmr7_1806 (179 aa).

It belongs to the UPF0227 family.

In Shewanella sp. (strain MR-7), this protein is UPF0227 protein Shewmr7_1806.